Here is a 582-residue protein sequence, read N- to C-terminus: uncharacterized protein (582 aa).

The next 6 helical transmembrane spans lie at 17–37 (VAML…LPTV), 57–77 (LGAV…GAVY), 131–151 (MTAT…IMAI), 156–176 (ALTW…YWII), 239–259 (ALML…LIWF), and 271–291 (VGSL…VLMA). Positions 17–300 (VAMLMMLQLV…ATMTLAVLPR (284 aa)) constitute an ABC transmembrane type-1 domain. The 237-residue stretch at 335–571 (VRLAGATFTY…CPTYAEFAAS (237 aa)) folds into the ABC transporter domain. An ATP-binding site is contributed by 369–376 (GSTGSGKS).

It belongs to the ABC transporter superfamily.

It is found in the cell membrane. This is an uncharacterized protein from Mycobacterium tuberculosis (strain CDC 1551 / Oshkosh).